Consider the following 629-residue polypeptide: tRNA uridine 5-carboxymethylaminomethyl modification enzyme MnmG (629 aa).

13–18 contacts FAD; the sequence is GGGHAG. Residue 273–287 coordinates NAD(+); it reads GPRYCPSIEDKVVRF.

It belongs to the MnmG family. As to quaternary structure, homodimer. Heterotetramer of two MnmE and two MnmG subunits. FAD serves as cofactor.

The protein localises to the cytoplasm. Its function is as follows. NAD-binding protein involved in the addition of a carboxymethylaminomethyl (cmnm) group at the wobble position (U34) of certain tRNAs, forming tRNA-cmnm(5)s(2)U34. The polypeptide is tRNA uridine 5-carboxymethylaminomethyl modification enzyme MnmG (Nitrosococcus oceani (strain ATCC 19707 / BCRC 17464 / JCM 30415 / NCIMB 11848 / C-107)).